The primary structure comprises 134 residues: Terepressin/terephysin (134 aa).

An N-terminal signal peptide occupies residues 1–33; sequence MKCSVLPRSRLSWTMCVLLLPLLMLMLEGGVQG. Cysteines 34 and 39 form a disulfide. Positions 44 to 50 are excised as a propeptide; that stretch reads KRAVDSV. Disulfide bonds link Cys-56–Cys-100, Cys-59–Cys-73, Cys-67–Cys-90, Cys-74–Cys-80, Cys-107–Cys-121, Cys-115–Cys-133, and Cys-122–Cys-127.

This sequence belongs to the vasopressin/oxytocin family. Contains 7 disulfide bonds. As to expression, expressed by the venom duct.

Its subcellular location is the secreted. This chain is Terepressin/terephysin, found in Terebra subulata (Chocolate spotted auger).